A 481-amino-acid chain; its full sequence is Drebrin-like protein (481 aa).

Residues S3–N131 enclose the ADF-H domain. A compositionally biased stretch (basic and acidic residues) spans Y217–K227. Residues Y217 to G423 are disordered. Low complexity predominate over residues Q228–A237. The segment covering T248–T261 has biased composition (polar residues). Positions P291–P300 are enriched in pro residues. Residues Q325–Q335 are compositionally biased toward acidic residues. The segment covering Q336–Q413 has biased composition (low complexity). The region spanning S422 to L481 is the SH3 domain.

It belongs to the ABP1 family.

Its subcellular location is the cytoplasm. It is found in the cytoskeleton. The protein localises to the cell projection. It localises to the pseudopodium. Its function is as follows. Actin-binding adapter protein. Binds to F-actin but is not involved in actin polymerization, capping or bundling. Does not bind G-actin. Controls pseudopodium number and motility in early stages of chemotactic aggregation. This chain is Drebrin-like protein (abpE-1), found in Dictyostelium discoideum (Social amoeba).